The chain runs to 882 residues: Piwi-like protein 3 (882 aa).

The segment covering 1 to 15 (MPGRARTRARGRARR) has biased composition (basic residues). Residues 1–91 (MPGRARTRAR…EAGLHTAPLQ (91 aa)) form a disordered region. Residues 32-46 (SATTQEPPQLQSTPR) are compositionally biased toward polar residues. The region spanning 293 to 406 (TAYDFIKRTS…LIPQLCHMTG (114 aa)) is the PAZ domain. One can recognise a Piwi domain in the interval 578–868 (KVICILPNDD…LAYLVGQSIH (291 aa)).

Belongs to the argonaute family. Piwi subfamily. As to expression, expressed in testis.

Its subcellular location is the cytoplasm. Functionally, may play a role during spermatogenesis by repressing transposable elements and preventing their mobilization, which is essential for the germline integrity. Acts via the piRNA metabolic process, which mediates the repression of transposable elements during meiosis by forming complexes composed of piRNAs and Piwi proteins and govern the methylation and subsequent repression of transposons. Directly binds piRNAs, a class of 24 to 30 nucleotide RNAs that are generated by a Dicer-independent mechanism and are primarily derived from transposons and other repeated sequence elements. Besides their function in transposable elements repression, piRNAs are probably involved in other processes during meiosis such as translation regulation. The sequence is that of Piwi-like protein 3 (PIWIL3) from Homo sapiens (Human).